A 73-amino-acid polypeptide reads, in one-letter code: Large ribosomal subunit protein bL31 (73 aa).

Zn(2+)-binding residues include Cys-16, Cys-18, Cys-37, and Cys-40.

It belongs to the bacterial ribosomal protein bL31 family. Type A subfamily. Part of the 50S ribosomal subunit. It depends on Zn(2+) as a cofactor.

In terms of biological role, binds the 23S rRNA. The protein is Large ribosomal subunit protein bL31 of Hamiltonella defensa subsp. Acyrthosiphon pisum (strain 5AT).